Here is a 284-residue protein sequence, read N- to C-terminus: Nucleotide-binding protein Sputcn32_0712 (284 aa).

Residue 8 to 15 coordinates ATP; it reads GRSGSGKS. 56 to 59 contributes to the GTP binding site; the sequence is DVRN.

The protein belongs to the RapZ-like family.

Its function is as follows. Displays ATPase and GTPase activities. This chain is Nucleotide-binding protein Sputcn32_0712, found in Shewanella putrefaciens (strain CN-32 / ATCC BAA-453).